Reading from the N-terminus, the 109-residue chain is U-scoloptoxin(16)-Cw1a (109 aa).

The first 21 residues, 1 to 21 (MNAVFIVFLSAILSYPHESFA), serve as a signal peptide directing secretion.

It belongs to the scoloptoxin-16 family. In terms of processing, contains 4 disulfide bonds. Expressed by the venom gland.

The protein resides in the secreted. In Cormocephalus westwoodi (Westwood's green centipede), this protein is U-scoloptoxin(16)-Cw1a.